Consider the following 934-residue polypeptide: Protein translocase subunit SecA (934 aa).

ATP-binding positions include glutamine 87, 105-109 (GEGKT), and aspartate 515. Positions 918, 920, 929, and 930 each coordinate Zn(2+).

This sequence belongs to the SecA family. In terms of assembly, monomer and homodimer. Part of the essential Sec protein translocation apparatus which comprises SecA, SecYEG and auxiliary proteins SecDF-YajC and YidC. It depends on Zn(2+) as a cofactor.

It is found in the cell inner membrane. Its subcellular location is the cytoplasm. It catalyses the reaction ATP + H2O + cellular proteinSide 1 = ADP + phosphate + cellular proteinSide 2.. In terms of biological role, part of the Sec protein translocase complex. Interacts with the SecYEG preprotein conducting channel. Has a central role in coupling the hydrolysis of ATP to the transfer of proteins into and across the cell membrane, serving both as a receptor for the preprotein-SecB complex and as an ATP-driven molecular motor driving the stepwise translocation of polypeptide chains across the membrane. The chain is Protein translocase subunit SecA from Ralstonia pickettii (strain 12J).